The primary structure comprises 327 residues: Pyruvate dehydrogenase E1 component subunit beta (327 aa).

Thiamine diphosphate is bound at residue glutamate 60.

Heterodimer of an alpha and a beta chain. Requires thiamine diphosphate as cofactor.

The enzyme catalyses N(6)-[(R)-lipoyl]-L-lysyl-[protein] + pyruvate + H(+) = N(6)-[(R)-S(8)-acetyldihydrolipoyl]-L-lysyl-[protein] + CO2. Functionally, the pyruvate dehydrogenase complex catalyzes the overall conversion of pyruvate to acetyl-CoA and CO(2). It contains multiple copies of three enzymatic components: pyruvate dehydrogenase (E1), dihydrolipoamide acetyltransferase (E2) and lipoamide dehydrogenase (E3). The protein is Pyruvate dehydrogenase E1 component subunit beta (pdhB) of Acholeplasma laidlawii.